A 330-amino-acid polypeptide reads, in one-letter code: Spondin-2 (330 aa).

The first 25 residues, 1–25, serve as a signal peptide directing secretion; that stretch reads MENVSFSLDRTLWVFLLAMLGSTAG. The 191-residue stretch at 30–220 folds into the Spondin domain; that stretch reads GESVCTARPL…EITASSPSHP (191 aa). A disulfide bridge connects residues cysteine 34 and cysteine 170. Residue glutamate 140 coordinates a divalent metal cation. Residues aspartate 159, aspartate 187, and aspartate 191 each contribute to the Ca(2+) site. The 55-residue stretch at 276 to 330 folds into the TSP type-1 domain; that stretch reads DCEVSLWSSWGLCGGPCGKLGAKSRTRYVRVQPANNGTPCPELEEEAECAPDNCV. Tryptophan 282 carries a C-linked (Man) tryptophan glycan.

Monomer. Interacts with integrin. Abundantly expressed in the developing hippocampus.

The protein localises to the secreted. It is found in the extracellular space. It localises to the extracellular matrix. Cell adhesion protein that promotes adhesion and outgrowth of hippocampal embryonic neurons. Binds directly to bacteria and their components and functions as an opsonin for macrophage phagocytosis of bacteria. Essential in the initiation of the innate immune response and represents a unique pattern-recognition molecule in the ECM for microbial pathogens. This is Spondin-2 (Spon2) from Rattus norvegicus (Rat).